A 143-amino-acid chain; its full sequence is Small ribosomal subunit protein eS12 (143 aa).

Glycyl lysine isopeptide (Lys-Gly) (interchain with G-Cter in ubiquitin) cross-links involve residues Lys-85, Lys-95, and Lys-114.

The protein belongs to the eukaryotic ribosomal protein eS12 family. Component of the small ribosomal subunit (SSU). Mature yeast ribosomes consist of a small (40S) and a large (60S) subunit. The 40S small subunit contains 1 molecule of ribosomal RNA (18S rRNA) and 33 different proteins (encoded by 57 genes). The large 60S subunit contains 3 rRNA molecules (25S, 5.8S and 5S rRNA) and 46 different proteins (encoded by 81 genes).

It is found in the cytoplasm. Functionally, component of the ribosome, a large ribonucleoprotein complex responsible for the synthesis of proteins in the cell. The small ribosomal subunit (SSU) binds messenger RNAs (mRNAs) and translates the encoded message by selecting cognate aminoacyl-transfer RNA (tRNA) molecules. The large subunit (LSU) contains the ribosomal catalytic site termed the peptidyl transferase center (PTC), which catalyzes the formation of peptide bonds, thereby polymerizing the amino acids delivered by tRNAs into a polypeptide chain. The nascent polypeptides leave the ribosome through a tunnel in the LSU and interact with protein factors that function in enzymatic processing, targeting, and the membrane insertion of nascent chains at the exit of the ribosomal tunnel. The polypeptide is Small ribosomal subunit protein eS12 (Saccharomyces cerevisiae (strain ATCC 204508 / S288c) (Baker's yeast)).